A 346-amino-acid chain; its full sequence is Probable long-chain-alcohol O-fatty-acyltransferase 6 (346 aa).

The next 8 membrane-spanning stretches (helical) occupy residues 7-27 (LFIQVWVSAIISVTYCYYLTP), 36-56 (LLSVLPVCVLFLIIPIFFSTV), 59-79 (SFTIAFFLSGLAVPKLILFAL), 116-136 (FPKWVFALKVFIFGALLLQAY), 146-166 (FLLGLYALHIYLELEISLTLI), 228-248 (FFAIFATFLVSGVAHEILYFY), 255-275 (TWEVTWFFVLHGFCMAAEVAL), and 289-309 (PAVSRLLTVGFVFVTGVWLFS).

The protein belongs to the wax synthase family.

It localises to the membrane. The enzyme catalyses a long chain fatty alcohol + a fatty acyl-CoA = a wax ester + CoA. In terms of biological role, catalyzes the final step in the synthesis of long-chain linear esters (waxes). In Arabidopsis thaliana (Mouse-ear cress), this protein is Probable long-chain-alcohol O-fatty-acyltransferase 6 (AT6).